Here is a 142-residue protein sequence, read N- to C-terminus: Large ribosomal subunit protein uL13 (142 aa).

It belongs to the universal ribosomal protein uL13 family. In terms of assembly, part of the 50S ribosomal subunit.

In terms of biological role, this protein is one of the early assembly proteins of the 50S ribosomal subunit, although it is not seen to bind rRNA by itself. It is important during the early stages of 50S assembly. This Chromobacterium violaceum (strain ATCC 12472 / DSM 30191 / JCM 1249 / CCUG 213 / NBRC 12614 / NCIMB 9131 / NCTC 9757 / MK) protein is Large ribosomal subunit protein uL13.